Here is a 286-residue protein sequence, read N- to C-terminus: Pyridoxal kinase PdxY (286 aa).

Residues S9 and 44–45 (TQ) contribute to the substrate site. ATP is bound by residues D111, A143, E148, K181, and 208–211 (RPLV). D223 is a substrate binding site.

This sequence belongs to the pyridoxine kinase family. PdxY subfamily. Homodimer. Requires Mg(2+) as cofactor.

It catalyses the reaction pyridoxal + ATP = pyridoxal 5'-phosphate + ADP + H(+). It participates in cofactor metabolism; pyridoxal 5'-phosphate salvage; pyridoxal 5'-phosphate from pyridoxal: step 1/1. Pyridoxal kinase involved in the salvage pathway of pyridoxal 5'-phosphate (PLP). Catalyzes the phosphorylation of pyridoxal to PLP. The sequence is that of Pyridoxal kinase PdxY from Yersinia pseudotuberculosis serotype I (strain IP32953).